Consider the following 599-residue polypeptide: Elongation factor 4 (599 aa).

Positions Glu-4 to Glu-186 constitute a tr-type G domain. GTP contacts are provided by residues Asp-16–Thr-21 and Asn-133–Asp-136.

Belongs to the TRAFAC class translation factor GTPase superfamily. Classic translation factor GTPase family. LepA subfamily.

The protein localises to the cell inner membrane. It catalyses the reaction GTP + H2O = GDP + phosphate + H(+). Required for accurate and efficient protein synthesis under certain stress conditions. May act as a fidelity factor of the translation reaction, by catalyzing a one-codon backward translocation of tRNAs on improperly translocated ribosomes. Back-translocation proceeds from a post-translocation (POST) complex to a pre-translocation (PRE) complex, thus giving elongation factor G a second chance to translocate the tRNAs correctly. Binds to ribosomes in a GTP-dependent manner. This chain is Elongation factor 4, found in Geobacter metallireducens (strain ATCC 53774 / DSM 7210 / GS-15).